The chain runs to 186 residues: Ribosome-recycling factor (186 aa).

Belongs to the RRF family.

It localises to the cytoplasm. In terms of biological role, responsible for the release of ribosomes from messenger RNA at the termination of protein biosynthesis. May increase the efficiency of translation by recycling ribosomes from one round of translation to another. In Bartonella henselae (strain ATCC 49882 / DSM 28221 / CCUG 30454 / Houston 1) (Rochalimaea henselae), this protein is Ribosome-recycling factor.